A 66-amino-acid polypeptide reads, in one-letter code: Photosystem II reaction center protein J (66 aa).

The segment at 1–25 (MSGKKSPYPDGRIPDRNPDGTPAVP) is disordered. A helical membrane pass occupies residues 37–57 (LWLVATAGGMAVLFVVGLFFY).

It belongs to the PsbJ family. In terms of assembly, PSII is composed of 1 copy each of membrane proteins PsbA, PsbB, PsbC, PsbD, PsbE, PsbF, PsbH, PsbI, PsbJ, PsbK, PsbL, PsbM, PsbT, PsbX, PsbY, PsbZ, Psb30/Ycf12, peripheral proteins PsbO, CyanoQ (PsbQ), PsbU, PsbV and a large number of cofactors. It forms dimeric complexes.

The protein resides in the cellular thylakoid membrane. Functionally, one of the components of the core complex of photosystem II (PSII). PSII is a light-driven water:plastoquinone oxidoreductase that uses light energy to abstract electrons from H(2)O, generating O(2) and a proton gradient subsequently used for ATP formation. It consists of a core antenna complex that captures photons, and an electron transfer chain that converts photonic excitation into a charge separation. In Synechococcus sp. (strain CC9605), this protein is Photosystem II reaction center protein J.